The following is a 540-amino-acid chain: Threonine--tRNA ligase catalytic subunit (540 aa).

Positions 134-428 (DHRIIGERLD…LLEHFRGKLP (295 aa)) are catalytic. Residues cysteine 226, histidine 277, and histidine 405 each contribute to the Zn(2+) site.

Belongs to the class-II aminoacyl-tRNA synthetase family. In terms of assembly, homodimer. Probably interacts with its editing subunit. Zn(2+) is required as a cofactor.

It localises to the cytoplasm. It catalyses the reaction tRNA(Thr) + L-threonine + ATP = L-threonyl-tRNA(Thr) + AMP + diphosphate + H(+). Functionally, catalyzes the attachment of threonine to tRNA(Thr) in a two-step reaction: L-threonine is first activated by ATP to form Thr-AMP and then transferred to the acceptor end of tRNA(Thr). Also activates L-serine and transfers it to tRNA(Thr) but cannot deacylate incorrectly charged amino acid; unlike most archaea the editing function is found in a freestanding protein. This Sulfurisphaera tokodaii (strain DSM 16993 / JCM 10545 / NBRC 100140 / 7) (Sulfolobus tokodaii) protein is Threonine--tRNA ligase catalytic subunit.